Reading from the N-terminus, the 285-residue chain is Ribosomal RNA small subunit methyltransferase H (285 aa).

S-adenosyl-L-methionine contacts are provided by residues 34-36 (AGH), aspartate 51, phenylalanine 75, aspartate 96, and histidine 103. Residues 258–285 (PLVPSEKEAAQNPRARSAKLRAAEKEAP) form a disordered region.

This sequence belongs to the methyltransferase superfamily. RsmH family.

It is found in the cytoplasm. The enzyme catalyses cytidine(1402) in 16S rRNA + S-adenosyl-L-methionine = N(4)-methylcytidine(1402) in 16S rRNA + S-adenosyl-L-homocysteine + H(+). Specifically methylates the N4 position of cytidine in position 1402 (C1402) of 16S rRNA. This is Ribosomal RNA small subunit methyltransferase H from Thermus thermophilus (strain ATCC BAA-163 / DSM 7039 / HB27).